Here is a 91-residue protein sequence, read N- to C-terminus: UPF0147 protein DKAM_0139 (91 aa).

The protein belongs to the UPF0147 family.

This chain is UPF0147 protein DKAM_0139, found in Desulfurococcus amylolyticus (strain DSM 18924 / JCM 16383 / VKM B-2413 / 1221n) (Desulfurococcus kamchatkensis).